Consider the following 625-residue polypeptide: Phosphomethylpyrimidine synthase (625 aa).

Substrate contacts are provided by residues N230, M259, Y288, H324, 344–346, 385–388, and E424; these read SRG and DGLR. Residue H428 coordinates Zn(2+). Y451 is a substrate binding site. Residue H492 coordinates Zn(2+). [4Fe-4S] cluster contacts are provided by C572, C575, and C580.

It belongs to the ThiC family. Homodimer. [4Fe-4S] cluster is required as a cofactor.

The enzyme catalyses 5-amino-1-(5-phospho-beta-D-ribosyl)imidazole + S-adenosyl-L-methionine = 4-amino-2-methyl-5-(phosphooxymethyl)pyrimidine + CO + 5'-deoxyadenosine + formate + L-methionine + 3 H(+). It functions in the pathway cofactor biosynthesis; thiamine diphosphate biosynthesis. Functionally, catalyzes the synthesis of the hydroxymethylpyrimidine phosphate (HMP-P) moiety of thiamine from aminoimidazole ribotide (AIR) in a radical S-adenosyl-L-methionine (SAM)-dependent reaction. This chain is Phosphomethylpyrimidine synthase, found in Xanthomonas euvesicatoria pv. vesicatoria (strain 85-10) (Xanthomonas campestris pv. vesicatoria).